Consider the following 354-residue polypeptide: Major egg antigen (354 aa).

The interval 1–21 is disordered; sequence MSGGKQHNAVSIPVNREQRSF. SHSP domains are found at residues 122–233 and 251–354; these read SVND…VAVR and AKGV…AITH.

It belongs to the small heat shock protein (HSP20) family.

This is Major egg antigen from Schistosoma mansoni (Blood fluke).